An 810-amino-acid polypeptide reads, in one-letter code: RING finger protein unkempt homolog (810 aa).

Positions 1–24 are disordered; sequence MSKGPGPGGSAASSAPPAATAQVL. Over residues 10–19 the composition is skewed to low complexity; the sequence is SAASSAPPAA. C3H1-type zinc fingers lie at residues 84–113, 124–154, 215–241, 251–285, and 293–321; these read YSPDVYCTKYDEATGLCPEGDECPFLHRTT, YYKTGICIHETDSKGNCTKNGLHCAFAHGPH, NYKTEPCKKPPRLCRQGYACPYYHNSK, KYRSSPCPNVKHGDEWGDPGKCENGDACQYCHTRT, and IYKSTKCNDMQQAGSCPRGPFCAFAHIEP. The disordered stretch occupies residues 239 to 265; the sequence is NSKDRRRSPRKHKYRSSPCPNVKHGDE. S240 carries the post-translational modification Phosphoserine. The segment covering 241 to 253 has biased composition (basic residues); sequence KDRRRSPRKHKYR. Residues S374, S378, S385, and S394 each carry the phosphoserine modification. Residues 478 to 497 are disordered; the sequence is TSSLAATPPSPAGTNSTPGM. S631 carries the phosphoserine modification. Residues 643-727 adopt a coiled-coil conformation; it reads GAAELARLRQ…ERLHTVPEAQ (85 aa). Residues 766-801 form an RING-type; degenerate zinc finger; that stretch reads SVKCLKCQEQTRAVLPCQHAVLCELCAEGSECPVCQ.

This sequence belongs to the unkempt family.

Its subcellular location is the cytoplasm. Its function is as follows. Sequence-specific RNA-binding protein which plays an important role in the establishment and maintenance of the early morphology of cortical neurons during embryonic development. Acts as a translation repressor and controls a translationally regulated cell morphology program to ensure proper structuring of the nervous system. Translational control depends on recognition of its binding element within target mRNAs which consists of a mandatory UAG trimer upstream of a U/A-rich motif. Associated with polysomes. The sequence is that of RING finger protein unkempt homolog (Unk) from Mus musculus (Mouse).